The sequence spans 210 residues: Small ribosomal subunit protein uS3 (210 aa).

A KH type-2 domain is found at 38–106; that stretch reads LRSFLKKRLY…EVYLNIQEVR (69 aa).

This sequence belongs to the universal ribosomal protein uS3 family. In terms of assembly, part of the 30S ribosomal subunit. Forms a tight complex with proteins S10 and S14.

Binds the lower part of the 30S subunit head. Binds mRNA in the 70S ribosome, positioning it for translation. This is Small ribosomal subunit protein uS3 from Geotalea uraniireducens (strain Rf4) (Geobacter uraniireducens).